The following is a 260-amino-acid chain: Flagellar basal-body rod protein FlgG (260 aa).

Belongs to the flagella basal body rod proteins family. As to quaternary structure, the basal body constitutes a major portion of the flagellar organelle and consists of four rings (L,P,S, and M) mounted on a central rod. The rod consists of about 26 subunits of FlgG in the distal portion, and FlgB, FlgC and FlgF are thought to build up the proximal portion of the rod with about 6 subunits each.

It localises to the bacterial flagellum basal body. In Buchnera aphidicola subsp. Schizaphis graminum (strain Sg), this protein is Flagellar basal-body rod protein FlgG (flgG).